The chain runs to 247 residues: 2,3-bisphosphoglycerate-dependent phosphoglycerate mutase (247 aa).

Residues 8–15 (RHGESQWN), 21–22 (TG), R60, 87–90 (ERHY), K98, 114–115 (RR), and 183–184 (GN) each bind substrate. H9 functions as the Tele-phosphohistidine intermediate in the catalytic mechanism. Residue E87 is the Proton donor/acceptor of the active site.

Belongs to the phosphoglycerate mutase family. BPG-dependent PGAM subfamily.

It catalyses the reaction (2R)-2-phosphoglycerate = (2R)-3-phosphoglycerate. It participates in carbohydrate degradation; glycolysis; pyruvate from D-glyceraldehyde 3-phosphate: step 3/5. In terms of biological role, catalyzes the interconversion of 2-phosphoglycerate and 3-phosphoglycerate. In Chlorobium phaeovibrioides (strain DSM 265 / 1930) (Prosthecochloris vibrioformis (strain DSM 265)), this protein is 2,3-bisphosphoglycerate-dependent phosphoglycerate mutase.